The chain runs to 106 residues: MGMNQQRLTQVILVPVVSEKSNVLAEKCNQMTFKVLANATKPEIKAAVELLFGVQVASVTTVTTKGKTKRFGRILGRRSDVKKAYVSLVDGQELDLEAAAAAADKE.

The protein belongs to the universal ribosomal protein uL23 family. Part of the 50S ribosomal subunit. Contacts protein L29, and trigger factor when it is bound to the ribosome.

Functionally, one of the early assembly proteins it binds 23S rRNA. One of the proteins that surrounds the polypeptide exit tunnel on the outside of the ribosome. Forms the main docking site for trigger factor binding to the ribosome. This chain is Large ribosomal subunit protein uL23, found in Neisseria gonorrhoeae (strain ATCC 700825 / FA 1090).